The primary structure comprises 823 residues: Spindle pole body component SPC97 (823 aa).

This sequence belongs to the TUBGCP family. In terms of assembly, interacts with TUB4, SPC72 and SPC98.

It is found in the nucleus. The protein resides in the cytoplasm. The protein localises to the cytoskeleton. Its subcellular location is the microtubule organizing center. It localises to the spindle pole body. In terms of biological role, involved in microtubule organization by the microtubule organizing center, the spindle pole body (SPB). Probably part of the microtubule attachment site at the SPB. This chain is Spindle pole body component SPC97 (SPC97), found in Saccharomyces cerevisiae (strain ATCC 204508 / S288c) (Baker's yeast).